Here is a 424-residue protein sequence, read N- to C-terminus: Histidine--tRNA ligase (424 aa).

This sequence belongs to the class-II aminoacyl-tRNA synthetase family. In terms of assembly, homodimer.

Its subcellular location is the cytoplasm. It carries out the reaction tRNA(His) + L-histidine + ATP = L-histidyl-tRNA(His) + AMP + diphosphate + H(+). This chain is Histidine--tRNA ligase, found in Pediococcus pentosaceus (strain ATCC 25745 / CCUG 21536 / LMG 10740 / 183-1w).